A 626-amino-acid polypeptide reads, in one-letter code: Chaperone protein DnaK (626 aa).

Threonine 197 bears the Phosphothreonine; by autocatalysis mark. A compositionally biased stretch (low complexity) spans 598-612 (AQGEQGQAAQPQAET). Positions 598–626 (AQGEQGQAAQPQAETQGDDVQDVEFEEVK) are disordered. Residues 613-626 (QGDDVQDVEFEEVK) are compositionally biased toward acidic residues.

This sequence belongs to the heat shock protein 70 family.

Its function is as follows. Acts as a chaperone. This chain is Chaperone protein DnaK, found in Flavobacterium psychrophilum (strain ATCC 49511 / DSM 21280 / CIP 103535 / JIP02/86).